Reading from the N-terminus, the 200-residue chain is Sec-independent protein translocase protein TatB (200 aa).

Residues 2–22 form a helical membrane-spanning segment; that stretch reads LPDIGGTELLIIAAVALIVVG. The interval 160–200 is disordered; sequence KAPRKRASQKQEITVEAPKAVRAPRKRASKAGDSTASDIVS. Residues 191–200 show a composition bias toward polar residues; it reads GDSTASDIVS.

Belongs to the TatB family. The Tat system comprises two distinct complexes: a TatABC complex, containing multiple copies of TatA, TatB and TatC subunits, and a separate TatA complex, containing only TatA subunits. Substrates initially bind to the TatABC complex, which probably triggers association of the separate TatA complex to form the active translocon.

Its subcellular location is the cell inner membrane. Part of the twin-arginine translocation (Tat) system that transports large folded proteins containing a characteristic twin-arginine motif in their signal peptide across membranes. Together with TatC, TatB is part of a receptor directly interacting with Tat signal peptides. TatB may form an oligomeric binding site that transiently accommodates folded Tat precursor proteins before their translocation. In Caulobacter vibrioides (strain ATCC 19089 / CIP 103742 / CB 15) (Caulobacter crescentus), this protein is Sec-independent protein translocase protein TatB.